The sequence spans 300 residues: DNA repair protein PprA (300 aa).

Phosphothreonine is present on Thr-88. Phosphoserine is present on Ser-128. The residue at position 160 (Thr-160) is a Phosphothreonine.

Post-translationally, phosphorylated by RqkA in vitro. Phosphorylated primarily at Thr-88, and to a little extent at Ser-128 and Thr-160.

Its activity is regulated as follows. Phosphorylation increases DNA binding affinity. DsDNA-binding protein that contributes to the ionizing radiation resistance of D.radiodurans. Plays a role in DNA repair and genome reconstitution, and is necessary for recovery from severe genomic fragmentation as a result of exposure to severe levels of ionizing radiation. In vitro, binds to double-stranded DNA carrying strand breaks and stimulates the DNA end-joining reaction catalyzed by DNA ligases. Thus, PprA plays a critical role in a non-homologous end-joining (NHEJ) pathway for the repair of radiation-induced DNA double-strands breaks. Cannot bind to dsDNA without strand breaks or single-stranded DNA. This chain is DNA repair protein PprA (pprA), found in Deinococcus radiodurans (strain ATCC 13939 / DSM 20539 / JCM 16871 / CCUG 27074 / LMG 4051 / NBRC 15346 / NCIMB 9279 / VKM B-1422 / R1).